The sequence spans 476 residues: E1B 55 kDa protein (476 aa).

Disordered regions lie at residues 1 to 20 and 42 to 95; these read MERPNSSVAGLYSGLHGNGS and FGSS…KMEN. A phosphoserine mark is found at Ser472 and Ser473.

It belongs to the adenoviridae E1B 55 kDa protein family. In terms of assembly, interacts with host PML-4 and PML-5; this interaction promotes efficient subnuclear targeting of E1B-55K to PML nuclear bodies. Interacts with E4-ORF3 protein. Interacts with E4-ORF6 protein.

The protein resides in the host nucleus. The protein localises to the host cytoplasm. In terms of biological role, plays a major role to prevent cellular inhibition of viral genome replication. Assembles an SCF-like E3 ubiquitin ligase complex based on the cellular proteins ELOB, ELOC, CUL5 and RBX1, in cooperation with viral E4orf6. This viral RING-type ligase ubiquitinates cellular substrates and targets them to proteasomal degradation: TP53/p53, LIG4, MRE11-RAD50-NBS1 (MRN) complex, ITGA3, DAXX and BLM. E1B-55K probably acts as the substrate-specific adapter of the SCF-like E3 ubiquitin ligase complex. Degradation of host TP53/p53 activity is essential for preventing E1A-induced TP53 accumulation that would otherwise lead to cell apoptosis and growth arrest. E1B-55K also inactivates TP53 transcription-factor activity by binding its transactivation domain. E1B-55K also functions as a SUMO1 E3 ligase for TP53 which causes the latter to be sequestered in promyelocytic leukemia (PML) nuclear bodies thereby contributing to maximal inhibition of TP53 function. This Human adenovirus F serotype 40 (HAdV-40) protein is E1B 55 kDa protein.